A 195-amino-acid polypeptide reads, in one-letter code: RILP-like protein 2 (195 aa).

The region spanning 8 to 92 is the RH1 domain; that stretch reads SPTQAFDKDV…RTETDRVVAE (85 aa). Residues 58–149 adopt a coiled-coil conformation; that stretch reads LEMFETMVNK…AQEELQLYKS (92 aa). Residues 115 to 185 form the RH2 domain; it reads RPRFTMQELK…ITEESKEKST (71 aa).

It belongs to the RILPL family.

It localises to the cytoplasm. Its subcellular location is the cytosol. The protein localises to the cytoskeleton. The protein resides in the microtubule organizing center. It is found in the centrosome. It localises to the cell projection. Its subcellular location is the cilium. Its function is as follows. Involved in cell shape and neuronal morphogenesis, positively regulating the establishment and maintenance of dendritic spines. Plays a role in cellular protein transport. The sequence is that of RILP-like protein 2 (rilpl2) from Danio rerio (Zebrafish).